The following is a 108-amino-acid chain: Insertion element IS6110 uncharacterized 12.0 kDa protein (108 aa).

Belongs to the transposase 8 family.

This chain is Insertion element IS6110 uncharacterized 12.0 kDa protein, found in Mycobacterium bovis (strain ATCC BAA-935 / AF2122/97).